Here is a 645-residue protein sequence, read N- to C-terminus: Envelope glycoprotein (645 aa).

A signal peptide spans 1–33; that stretch reads MESPAFSKPLKDKINPWGPLIIMGILVRAGASV. The tract at residues 32 to 237 is receptor-binding domain (RBD); it reads SVQRDSPHQV…QVLNVGPRVP (206 aa). At 34–585 the chain is on the extracellular side; that stretch reads QRDSPHQVFN…FNRSPWFTTL (552 aa). 2 N-linked (GlcNAc...) asparagine; by host glycosylation sites follow: Asn-43 and Asn-58. Intrachain disulfides connect Cys-113-Cys-130 and Cys-122-Cys-135. The tract at residues 259–286 is disordered; the sequence is PRPPRPPPSGAASMVPGAPPPSQQPGTG. An N-linked (GlcNAc...) asparagine; by host glycan is attached at Asn-301. 6 disulfides stabilise this stretch: Cys-311–Cys-314, Cys-311–Cys-538, Cys-341–Cys-395, Cys-360–Cys-372, Cys-402–Cys-415, and Cys-530–Cys-537. The short motif at 311–314 is the CXXC element; it reads CWLC. N-linked (GlcNAc...) asparagine; by host glycans are attached at residues Asn-333 and Asn-340. N-linked (GlcNAc...) asparagine; by host glycans are attached at residues Asn-373 and Asn-409. The interval 447 to 467 is fusion peptide; sequence VSLTLALLLGGLTMGGIAAGV. Positions 490–510 form a coiled coil; the sequence is DLGALEKSVSALEKSLTSLSE. Residues 513–529 are immunosuppression; that stretch reads LQNRRGLDLLFLKEGGL. Positions 530 to 538 match the CX6CC motif; sequence CAALKEECC. A helical transmembrane segment spans residues 586–606; that stretch reads ISTIMGPLIVLLLILLFGPCI. Residue Cys-605 is the site of S-palmitoyl cysteine; by host attachment. The Cytoplasmic portion of the chain corresponds to 607–640; it reads LNRLVQFVKDRISVVQALVLTQQYHQLKSIDPEE. Positions 630–633 match the YXXL motif; contains endocytosis signal motif; that stretch reads YHQL.

As to quaternary structure, the mature envelope protein (Env) consists of a trimer of SU-TM heterodimers attached by a labile interchain disulfide bond. The activated Env consists of SU monomers and TM trimers. In terms of processing, specific enzymatic cleavages in vivo yield mature proteins. Envelope glycoproteins are synthesized as an inactive precursor that is N-glycosylated and processed likely by host cell furin or by a furin-like protease in the Golgi to yield the mature SU and TM proteins. The cleavage site between SU and TM requires the minimal sequence [KR]-X-[KR]-R. The R-peptide is released from the C-terminus of the cytoplasmic tail of the TM protein upon particle formation as a result of proteolytic cleavage by the viral protease. Cleavage of this peptide is required for TM to become fusogenic. The CXXC motif is highly conserved across a broad range of retroviral envelope proteins. It is thought to participate in the formation of a labile disulfide bond possibly with the CX6CC motif present in the transmembrane protein. Isomerization of the intersubunit disulfide bond to an SU intrachain disulfide bond is thought to occur upon receptor recognition in order to allow membrane fusion. Post-translationally, the transmembrane protein is palmitoylated. In terms of processing, the R-peptide is palmitoylated.

The protein localises to the virion membrane. Its subcellular location is the host cell membrane. In terms of biological role, the surface protein (SU) attaches the virus to the host cell by binding to its receptor. This interaction activates a thiol in a CXXC motif of the C-terminal domain, where the other Cys residue participates in the formation of the intersubunit disulfide. The activated thiol will attack the disulfide and cause its isomerization into a disulfide isomer within the motif. This leads to SU displacement and TM refolding, and is thought to activate its fusogenic potential by unmasking its fusion peptide. Fusion occurs at the host cell plasma membrane. Functionally, the transmembrane protein (TM) acts as a class I viral fusion protein. Under the current model, the protein has at least 3 conformational states: pre-fusion native state, pre-hairpin intermediate state, and post-fusion hairpin state. During viral and target cell membrane fusion, the coiled coil regions (heptad repeats) assume a trimer-of-hairpins structure, positioning the fusion peptide in close proximity to the C-terminal region of the ectodomain. The formation of this structure appears to drive apposition and subsequent fusion of viral and target cell membranes. Membranes fusion leads to delivery of the nucleocapsid into the cytoplasm. The sequence is that of Envelope glycoprotein (env) from Xenotropic MuLV-related virus (isolate VP42) (XMRV).